A 250-amino-acid chain; its full sequence is 5'-nucleotidase SurE (250 aa).

4 residues coordinate a divalent metal cation: Asp-8, Asp-9, Ser-40, and Asn-94.

Belongs to the SurE nucleotidase family. It depends on a divalent metal cation as a cofactor.

It is found in the cytoplasm. It carries out the reaction a ribonucleoside 5'-phosphate + H2O = a ribonucleoside + phosphate. Its function is as follows. Nucleotidase that shows phosphatase activity on nucleoside 5'-monophosphates. This Wolbachia sp. subsp. Brugia malayi (strain TRS) protein is 5'-nucleotidase SurE.